Consider the following 506-residue polypeptide: GMP synthase [glutamine-hydrolyzing] (506 aa).

One can recognise a Glutamine amidotransferase type-1 domain in the interval 2 to 190 (SIVILDFGSQ…FLDICGVTRD (189 aa)). The Nucleophile role is filled by Cys79. Residues His165 and Glu167 contribute to the active site. One can recognise a GMPS ATP-PPase domain in the interval 191–381 (WNAEHIVDEL…LGLPDHIRMR (191 aa)). ATP is bound at residue 219–225 (SGGVDSS).

In terms of assembly, homodimer.

It catalyses the reaction XMP + L-glutamine + ATP + H2O = GMP + L-glutamate + AMP + diphosphate + 2 H(+). The protein operates within purine metabolism; GMP biosynthesis; GMP from XMP (L-Gln route): step 1/1. Functionally, catalyzes the synthesis of GMP from XMP. In Deinococcus radiodurans (strain ATCC 13939 / DSM 20539 / JCM 16871 / CCUG 27074 / LMG 4051 / NBRC 15346 / NCIMB 9279 / VKM B-1422 / R1), this protein is GMP synthase [glutamine-hydrolyzing] (guaA).